Reading from the N-terminus, the 367-residue chain is tRNA-specific 2-thiouridylase MnmA (367 aa).

ATP contacts are provided by residues 14–21 (AMSGGVDS) and Leu-40. Cys-108 acts as the Nucleophile in catalysis. A disulfide bridge connects residues Cys-108 and Cys-204. Gly-132 provides a ligand contact to ATP. The interaction with tRNA stretch occupies residues 154–156 (KDQ). The Cysteine persulfide intermediate role is filled by Cys-204.

The protein belongs to the MnmA/TRMU family.

The protein localises to the cytoplasm. The catalysed reaction is S-sulfanyl-L-cysteinyl-[protein] + uridine(34) in tRNA + AH2 + ATP = 2-thiouridine(34) in tRNA + L-cysteinyl-[protein] + A + AMP + diphosphate + H(+). Catalyzes the 2-thiolation of uridine at the wobble position (U34) of tRNA, leading to the formation of s(2)U34. The polypeptide is tRNA-specific 2-thiouridylase MnmA (Rickettsia bellii (strain OSU 85-389)).